The chain runs to 78 residues: Acyl carrier protein (78 aa).

The Carrier domain occupies 2-77 (SDIAERVKKI…DAIKYIGENM (76 aa)). An O-(pantetheine 4'-phosphoryl)serine modification is found at Ser-37.

It belongs to the acyl carrier protein (ACP) family. In terms of processing, 4'-phosphopantetheine is transferred from CoA to a specific serine of apo-ACP by AcpS. This modification is essential for activity because fatty acids are bound in thioester linkage to the sulfhydryl of the prosthetic group.

It is found in the cytoplasm. The protein operates within lipid metabolism; fatty acid biosynthesis. In terms of biological role, carrier of the growing fatty acid chain in fatty acid biosynthesis. This Magnetococcus marinus (strain ATCC BAA-1437 / JCM 17883 / MC-1) protein is Acyl carrier protein.